The primary structure comprises 213 residues: Probable chemoreceptor glutamine deamidase CheD (213 aa).

A compositionally biased stretch (basic residues) spans 1-12 (MNRHRPHSHRSK). Residues 1–25 (MNRHRPHSHRSKPASTQDQPDSVRR) are disordered.

This sequence belongs to the CheD family.

The enzyme catalyses L-glutaminyl-[protein] + H2O = L-glutamyl-[protein] + NH4(+). In terms of biological role, probably deamidates glutamine residues to glutamate on methyl-accepting chemotaxis receptors (MCPs), playing an important role in chemotaxis. This Rhodopseudomonas palustris (strain BisA53) protein is Probable chemoreceptor glutamine deamidase CheD.